A 65-amino-acid chain; its full sequence is Large ribosomal subunit protein bL35 (65 aa).

Residues 1–47 form a disordered region; it reads MPKIKTNRGAAKRFRKTASGKIKRNSAFTSHILTSKTRKRKRQLRSS. Residues 10–24 are compositionally biased toward basic residues; the sequence is AAKRFRKTASGKIKR. Residues 26 to 35 are compositionally biased toward polar residues; that stretch reads SAFTSHILTS.

This sequence belongs to the bacterial ribosomal protein bL35 family.

In Geobacter metallireducens (strain ATCC 53774 / DSM 7210 / GS-15), this protein is Large ribosomal subunit protein bL35.